We begin with the raw amino-acid sequence, 176 residues long: MSDSRLLPTGSSPLEVAAAKACAEIEKTPVSIRELWNPDTCPANLLPWLAWAFSVDRWDEKWPEATKRAVIRDAYFIHCHKGTIGAIRRVVEPLGYLINVTEWWENSDPPGTFRLDIGVLESGITEAMYQEMERLIADAKPASRHLIGLNITRDIPGYLFAGGVAYDGDVITVYPG.

It belongs to the P2likevirus gpI protein family.

The protein resides in the virion. Baseplate protein that may be part of the wedges of the baseplate. Plays a role in tail assembly. The protein is Baseplate protein I (I) of Escherichia phage P2 (Bacteriophage P2).